We begin with the raw amino-acid sequence, 388 residues long: Succinate--CoA ligase [ADP-forming] subunit beta (388 aa).

Residues 9–244 (KALFAEYGLP…PSQDDAREAH (236 aa)) enclose the ATP-grasp domain. ATP-binding positions include K46, 53-55 (GRG), E99, T102, and E107. Residues N199 and D213 each coordinate Mg(2+). Substrate contacts are provided by residues N264 and 321–323 (GIV).

The protein belongs to the succinate/malate CoA ligase beta subunit family. In terms of assembly, heterotetramer of two alpha and two beta subunits. It depends on Mg(2+) as a cofactor.

The enzyme catalyses succinate + ATP + CoA = succinyl-CoA + ADP + phosphate. The catalysed reaction is GTP + succinate + CoA = succinyl-CoA + GDP + phosphate. The protein operates within carbohydrate metabolism; tricarboxylic acid cycle; succinate from succinyl-CoA (ligase route): step 1/1. Succinyl-CoA synthetase functions in the citric acid cycle (TCA), coupling the hydrolysis of succinyl-CoA to the synthesis of either ATP or GTP and thus represents the only step of substrate-level phosphorylation in the TCA. The beta subunit provides nucleotide specificity of the enzyme and binds the substrate succinate, while the binding sites for coenzyme A and phosphate are found in the alpha subunit. The protein is Succinate--CoA ligase [ADP-forming] subunit beta of Shewanella amazonensis (strain ATCC BAA-1098 / SB2B).